The following is a 2776-amino-acid chain: Microtubule-associated protein 1A (2776 aa).

Residues serine 114, serine 117, serine 118, serine 121, and serine 155 each carry the phosphoserine modification. Tyrosine 177 carries the post-translational modification Phosphotyrosine. The segment at 310–331 (PSKIKHRADSKESLKAAPKTAM) is disordered. Serine 319 and serine 322 each carry phosphoserine. Copy 1 of the repeat occupies 336 to 338 (KRE). Residues 336–541 (KREEVLEEGA…TQDFEELKRE (206 aa)) are 11 X 3 AA approximate repeats of K-K-[DE]. The segment covering 345–390 (AKEARSELAKELAKSEKKAKEPSEKPPEKPSKPERVRTESSEALKA) has biased composition (basic and acidic residues). 8 disordered regions span residues 345–678 (AKEA…KAES), 738–809 (TIPG…TELT), 846–1076 (EDQS…AGGQ), 1094–1210 (ETGE…ESLG), 1223–1651 (EKGP…SPEQ), 1685–1729 (DGQG…FKDF), 1744–1848 (LAES…APFS), and 1866–2648 (AELE…NGLK). Serine 384 is modified (phosphoserine). Residues 391–406 (EKRKLIKDKVGKKHLK) are compositionally biased toward basic residues. 2 stretches are compositionally biased toward basic and acidic residues: residues 407–464 (EKIS…KPDL) and 484–500 (LKVDKGRAARGEKELSS). 9 repeat units span residues 415-417 (KRD), 420-422 (KKE), 424-426 (KKE), 427-429 (RKE), 431-433 (KKE), 436-438 (RKE), 440-442 (KKD), 444-446 (KKD), and 449-451 (RKD). At threonine 504 the chain carries Phosphothreonine. A phosphoserine mark is found at serine 526 and serine 527. Over residues 536-556 (EELKREERGLLAEPRDTELGE) the composition is skewed to basic and acidic residues. Residues 539–541 (KRE) form repeat 11. A compositionally biased stretch (polar residues) spans 567–579 (GRPSTAIQVTQPP). The segment covering 587 to 631 (QVEREKEVVPDFPEDKGSKNRAPDSGAEVEREKETWEERKPREAE) has biased composition (basic and acidic residues). Residues serine 604 and serine 611 each carry the phosphoserine modification. Phosphothreonine is present on threonine 633. Residues 640-667 (AREESEPEVKEDVIEKAELEEMEEVHPS) show a composition bias toward basic and acidic residues. Serine 644, serine 667, serine 678, and serine 786 each carry phosphoserine. Composition is skewed to polar residues over residues 785–800 (ASQSAESAVPASSSKT), 846–859 (EDQSVASLTAPQTE), and 870–882 (TVTSIPSSRTEAT). Phosphoserine occurs at positions 873, 876, 877, and 890. Threonine 893 is subject to Phosphothreonine. Phosphoserine is present on residues serine 895, serine 899, and serine 908. Residues 944-954 (VTTSEKLSSQY) show a composition bias toward polar residues. Serine 981, serine 991, serine 999, serine 1008, serine 1014, serine 1023, and serine 1062 each carry phosphoserine. Residue threonine 1068 is modified to Phosphothreonine. Low complexity predominate over residues 1096 to 1105 (GEAGAASGAG). Residues 1112–1124 (RTQEPAEPQKDEL) show a composition bias toward basic and acidic residues. Phosphoserine occurs at positions 1131, 1133, 1147, 1159, 1177, 1187, 1190, 1196, 1205, and 1208. Residues 1179 to 1189 (EDTQSLSFSEE) show a composition bias toward polar residues. The span at 1197–1210 (LDISSKQLSPESLG) shows a compositional bias: polar residues. Basic and acidic residues predominate over residues 1223–1234 (EKGPLVKAEDNS). A phosphoserine mark is found at serine 1251, serine 1289, serine 1310, serine 1313, and serine 1316. Over residues 1302–1317 (TSDSSLTKSPESLSSP) the composition is skewed to low complexity. Composition is skewed to basic and acidic residues over residues 1332-1350 (GSEDRATEQKEKELERKSE), 1370-1384 (SVMHQKDEALDEENK), 1391-1435 (KTSE…KALE), 1449-1488 (PRARAQEHRDLEQKDEHLELRDKTPEEKDKVLVLEDRAPE), 1499-1541 (RAPE…DQDN), and 1549-1599 (GTLK…EKTR). 3 positions are modified to phosphoserine: serine 1516, serine 1580, and serine 1606. Over residues 1609–1625 (EEGKAREQEEKYWKEQD) the composition is skewed to basic and acidic residues. Serine 1634 and serine 1648 each carry phosphoserine. Positions 1709 to 1718 (QEITPLQHTP) are enriched in polar residues. Phosphoserine occurs at positions 1720, 1747, 1762, 1768, and 1772. The residue at position 1777 (threonine 1777) is a Phosphothreonine. Phosphoserine occurs at positions 1783 and 1789. Polar residues predominate over residues 1794-1808 (TKSTPPTRNEPTTPS). The span at 1823-1844 (LPPAPLSPAPAPPTPAPDPHAP) shows a compositional bias: pro residues. A compositionally biased stretch (basic and acidic residues) spans 1878–1890 (KDYRKAEGEREGE). Residue serine 1902 is modified to Phosphoserine. 2 stretches are compositionally biased toward basic and acidic residues: residues 1907-1935 (EVTESHTTRDAEQTEPEQREPTPYPDERS) and 1972-1988 (STKEEAAGRNKSAEKEL). Residue threonine 1928 is modified to Phosphothreonine. Residues 1990–2006 (SAVSPPNLHSDTPTFSY) are compositionally biased toward polar residues. At serine 1993 the chain carries Phosphoserine. Residues 2013 to 2039 (TIPPRQEPEPGPNVEPSFTPPAVPPRA) are compositionally biased toward pro residues. At threonine 2031 the chain carries Phosphothreonine. Over residues 2042–2058 (SLSQDPSPPLNGSTTSC) the composition is skewed to polar residues. A phosphoserine mark is found at serine 2048 and serine 2082. The segment covering 2060–2096 (PDRRTPSPKEAGRSHWDDGTNDSDLEKGAREQPEKET) has biased composition (basic and acidic residues). A compositionally biased stretch (pro residues) spans 2149–2158 (PAPPQLPSPA). Phosphoserine occurs at positions 2209, 2226, 2230, 2233, and 2234. Positions 2231–2242 (EGSSSEATTPVI) are enriched in polar residues. The segment covering 2279–2292 (PLSPAPLASRDLAP) has biased composition (low complexity). Over residues 2355–2367 (AEKEEAEALHAWE) the composition is skewed to basic and acidic residues. Residue serine 2425 is modified to Phosphoserine. The span at 2478 to 2490 (SASDSGSSQSDSD) shows a compositional bias: low complexity. Positions 2535–2551 (DPPPAPLPDPRPPPPRP) are enriched in pro residues. Over residues 2566-2576 (GRVERLREKVQ) the composition is skewed to basic and acidic residues. 2 positions are modified to phosphoserine: serine 2623 and serine 2637.

Belongs to the MAP1 family. In terms of assembly, 3 different light chains, LC1 (a cleavage product of MAP1B), LC2 (a cleavage product of MAP1A) and LC3 (produced by one of the MAP1LC3 genes), can associate with the MAP1A or MAP1B heavy chains. Interacts with guanylate kinase-like domain of DLG1, DLG2 and DLG4. Binds to CSNK1D. Interacts with TIAM2. As to quaternary structure, interacts with ELAVL4. In terms of processing, phosphorylated by CSNK1D. Post-translationally, LC2 is generated from MAP1A by proteolytic processing. It is free to associate with both MAP1A and MAP1B. As to expression, both isoforms highly expressed in brain, and to a lesser extent in embryo. Isoform 1 is also expressed at a low level in other tissues including heart and muscle.

It localises to the cytoplasm. The protein localises to the cytoskeleton. Functionally, structural protein involved in the filamentous cross-bridging between microtubules and other skeletal elements. The protein is Microtubule-associated protein 1A (Map1a) of Mus musculus (Mouse).